The primary structure comprises 1068 residues: Putative protein TIC 214 N-terminal part (1068 aa).

A run of 6 helical transmembrane segments spans residues 11 to 31 (VLWV…LFGI), 68 to 88 (ITGQ…VLLI), 92 to 112 (LLTL…KDLI), 131 to 151 (IFFD…SPVL), 166 to 186 (FIFL…FVSL), and 213 to 233 (FSII…VPFI).

The protein belongs to the TIC214 family. As to quaternary structure, part of the Tic complex.

The protein localises to the plastid. It is found in the chloroplast inner membrane. Involved in protein precursor import into chloroplasts. May be part of an intermediate translocation complex acting as a protein-conducting channel at the inner envelope. This is Putative protein TIC 214 N-terminal part from Marchantia polymorpha (Common liverwort).